The chain runs to 190 residues: Peptidyl-tRNA hydrolase (190 aa).

A tRNA-binding site is contributed by Tyr14. The active-site Proton acceptor is the His19. Tyr64, Asn66, and Asn112 together coordinate tRNA.

Belongs to the PTH family. As to quaternary structure, monomer.

Its subcellular location is the cytoplasm. It carries out the reaction an N-acyl-L-alpha-aminoacyl-tRNA + H2O = an N-acyl-L-amino acid + a tRNA + H(+). Its function is as follows. Hydrolyzes ribosome-free peptidyl-tRNAs (with 1 or more amino acids incorporated), which drop off the ribosome during protein synthesis, or as a result of ribosome stalling. Functionally, catalyzes the release of premature peptidyl moieties from peptidyl-tRNA molecules trapped in stalled 50S ribosomal subunits, and thus maintains levels of free tRNAs and 50S ribosomes. In Chlorobium phaeobacteroides (strain DSM 266 / SMG 266 / 2430), this protein is Peptidyl-tRNA hydrolase.